The sequence spans 493 residues: MDASTLFKKVKVKRVLGSLEQQIDDITTDSRTAREGSIFVASVGYTVDSHKFCQNVADQGCKLVVVNKEQSLPANVTQVVVPDTLRVASILAHTLYDYPSHQLVTFGVTGTNGKTSIATMIHLIQRKLQKNSAYLGTNGFQINETKTKGANTTPETVSLTKKIKEAVDAGAESMTLEVSSHGLVLGRLRGVEFDVAIFSNLTQDHLDFHGTMEAYGHAKSLLFSQLGEDLSKEKYVVLNNDDSFSEYLRTVTPYEVFSYGIDEEAQFMAKNIQESLQGVSFDFVTPFGTYPVKSPYVGKFNISNIMAAMIAVWSKGTSLETIIKAVENLEPVEGRLEVLDPSLPIDLIIDYAHTADGMNKLIDAVQPFVKQKLIFLVGMAGERDLTKTPEMGRVACRADYVIFTPDNPANDDPKMLTAELAKGATHQNYIEFDDRAEGIKHAIDIAEPGDTVVLASKGREPYQIMPGHIKVPHRDDLIGLEAAYKKFGGGPVD.

S30 provides a ligand contact to UDP-N-acetyl-alpha-D-muramoyl-L-alanyl-D-glutamate. 110 to 116 (GTNGKTS) is a binding site for ATP. Residues N151, 152-153 (TT), S179, and R187 each bind UDP-N-acetyl-alpha-D-muramoyl-L-alanyl-D-glutamate. K219 is modified (N6-carboxylysine). An L-lysine recognition motif motif is present at residues 406–409 (DNPA).

Belongs to the MurCDEF family. MurE subfamily. It depends on Mg(2+) as a cofactor. Carboxylation is probably crucial for Mg(2+) binding and, consequently, for the gamma-phosphate positioning of ATP.

It localises to the cytoplasm. The catalysed reaction is UDP-N-acetyl-alpha-D-muramoyl-L-alanyl-D-glutamate + L-lysine + ATP = UDP-N-acetyl-alpha-D-muramoyl-L-alanyl-gamma-D-glutamyl-L-lysine + ADP + phosphate + H(+). Its pathway is cell wall biogenesis; peptidoglycan biosynthesis. In terms of biological role, catalyzes the addition of L-lysine to the nucleotide precursor UDP-N-acetylmuramoyl-L-alanyl-D-glutamate (UMAG) in the biosynthesis of bacterial cell-wall peptidoglycan. Cannot use diaminopimelate as substrate. Can accept L-ornithine as substrate, but the efficiency is 400-fold lower than that with L-lysine. Seems to have a role in beta-lactam antibiotic resistance. The protein is UDP-N-acetylmuramoyl-L-alanyl-D-glutamate--L-lysine ligase of Staphylococcus aureus (strain NCTC 8325 / PS 47).